The chain runs to 418 residues: Metacaspase-2 (418 aa).

The segment at 68–113 is disordered; that stretch reads PSPYTHAPHAPSPFNHAPPDSYPFTHAPPASSPFNHAPPGPPPPVH. The span at 70–80 shows a compositional bias: low complexity; sequence PYTHAPHAPSP. Pro residues predominate over residues 103–112; it reads HAPPGPPPPV. Catalysis depends on residues H200 and C256. Positions 385–406 are disordered; that stretch reads PDEEEEVNQAPQKTQEPQLSAN. Polar residues predominate over residues 393–405; that stretch reads QAPQKTQEPQLSA.

The protein belongs to the peptidase C14B family.

Its function is as follows. Acts as a negative regulator of oxidative stress cell death and hypersensitive cell death response mediated by immune response. Acts via indirect or direct regulation of AMC1 at postranscriptional level. In Arabidopsis thaliana (Mouse-ear cress), this protein is Metacaspase-2 (AMC2).